We begin with the raw amino-acid sequence, 563 residues long: Eukaryotic translation initiation factor 3 subunit D (563 aa).

The tract at residues 95–136 (PGYMRNRNRFNQRGGYRRDNRGGRFQGQGGNMGMQNLSRGRD) is disordered. An RNA gate region spans residues 294 to 308 (EFDLLTVGETANDLN). The interval 528–563 (IPNSTFETDEEDDDDDEDDVENDDGDDEKDEGDGED) is disordered. A compositionally biased stretch (acidic residues) spans 534–563 (ETDEEDDDDDEDDVENDDGDDEKDEGDGED).

This sequence belongs to the eIF-3 subunit D family. Component of the eukaryotic translation initiation factor 3 (eIF-3) complex.

Its subcellular location is the cytoplasm. Its function is as follows. mRNA cap-binding component of the eukaryotic translation initiation factor 3 (eIF-3) complex, which is involved in protein synthesis of a specialized repertoire of mRNAs and, together with other initiation factors, stimulates binding of mRNA and methionyl-tRNAi to the 40S ribosome. The eIF-3 complex specifically targets and initiates translation of a subset of mRNAs involved in cell proliferation. In the eIF-3 complex, eif3d specifically recognizes and binds the 7-methylguanosine cap of a subset of mRNAs. In Nematostella vectensis (Starlet sea anemone), this protein is Eukaryotic translation initiation factor 3 subunit D.